A 235-amino-acid polypeptide reads, in one-letter code: tRNA1(Val) (adenine(37)-N6)-methyltransferase (235 aa).

It belongs to the methyltransferase superfamily. tRNA (adenine-N(6)-)-methyltransferase family.

It is found in the cytoplasm. The enzyme catalyses adenosine(37) in tRNA1(Val) + S-adenosyl-L-methionine = N(6)-methyladenosine(37) in tRNA1(Val) + S-adenosyl-L-homocysteine + H(+). Specifically methylates the adenine in position 37 of tRNA(1)(Val) (anticodon cmo5UAC). The sequence is that of tRNA1(Val) (adenine(37)-N6)-methyltransferase from Glaesserella parasuis serovar 5 (strain SH0165) (Haemophilus parasuis).